We begin with the raw amino-acid sequence, 197 residues long: Imidazoleglycerol-phosphate dehydratase (197 aa).

It belongs to the imidazoleglycerol-phosphate dehydratase family.

It is found in the cytoplasm. The enzyme catalyses D-erythro-1-(imidazol-4-yl)glycerol 3-phosphate = 3-(imidazol-4-yl)-2-oxopropyl phosphate + H2O. The protein operates within amino-acid biosynthesis; L-histidine biosynthesis; L-histidine from 5-phospho-alpha-D-ribose 1-diphosphate: step 6/9. The polypeptide is Imidazoleglycerol-phosphate dehydratase (Chromobacterium violaceum (strain ATCC 12472 / DSM 30191 / JCM 1249 / CCUG 213 / NBRC 12614 / NCIMB 9131 / NCTC 9757 / MK)).